Reading from the N-terminus, the 476-residue chain is Bifunctional protein HldE (476 aa).

The interval 1 to 319 (MKITLPEYDK…ANAVYSQQEI (319 aa)) is ribokinase. 196 to 199 (NLAE) contributes to the ATP binding site. The active site involves Asp265. The cytidylyltransferase stretch occupies residues 345–476 (MTNGCFDILH…EIIKTIRNNS (132 aa)).

The protein in the N-terminal section; belongs to the carbohydrate kinase PfkB family. It in the C-terminal section; belongs to the cytidylyltransferase family. In terms of assembly, homodimer.

It catalyses the reaction D-glycero-beta-D-manno-heptose 7-phosphate + ATP = D-glycero-beta-D-manno-heptose 1,7-bisphosphate + ADP + H(+). The catalysed reaction is D-glycero-beta-D-manno-heptose 1-phosphate + ATP + H(+) = ADP-D-glycero-beta-D-manno-heptose + diphosphate. Its pathway is nucleotide-sugar biosynthesis; ADP-L-glycero-beta-D-manno-heptose biosynthesis; ADP-L-glycero-beta-D-manno-heptose from D-glycero-beta-D-manno-heptose 7-phosphate: step 1/4. It participates in nucleotide-sugar biosynthesis; ADP-L-glycero-beta-D-manno-heptose biosynthesis; ADP-L-glycero-beta-D-manno-heptose from D-glycero-beta-D-manno-heptose 7-phosphate: step 3/4. Functionally, catalyzes the phosphorylation of D-glycero-D-manno-heptose 7-phosphate at the C-1 position to selectively form D-glycero-beta-D-manno-heptose-1,7-bisphosphate. Its function is as follows. Catalyzes the ADP transfer from ATP to D-glycero-beta-D-manno-heptose 1-phosphate, yielding ADP-D-glycero-beta-D-manno-heptose. This chain is Bifunctional protein HldE, found in Psychromonas ingrahamii (strain DSM 17664 / CCUG 51855 / 37).